Reading from the N-terminus, the 492-residue chain is Phosphatidylinositol 4-kinase type 2-beta (492 aa).

Basic and acidic residues predominate over residues 1 to 11; sequence MEPKQTADARD. The segment at 1-98 is disordered; sequence MEPKQTADAR…SDRENMSGGH (98 aa). Residues 127 to 462 enclose the PI3K/PI4K catalytic domain; it reads GVFPERISQG…VQMPRVVVER (336 aa). The tract at residues 133–139 is G-loop; the sequence is ISQGSSG. ATP is bound by residues serine 140 and lysine 155. Residues 160–162 form an important for substrate binding region; the sequence is EPY. Residues 168–181 form an important for interaction with membranes region; it reads KWTKYFHKICCPCC. Residues 264 to 267 and 278 to 279 contribute to the ATP site; these read QLFV and RK. Positions 271–279 are important for interaction with membranes; that stretch reads KEADYWLRK. The catalytic loop stretch occupies residues 308 to 316; that stretch reads RNTDRGNDN. The interval 353–373 is activation loop; it reads AIDNGLAFPFKHPDEWRAYPF. Aspartate 355 lines the ATP pocket. Residues 368-377 are important for interaction with membranes; it reads WRAYPFHWAW.

Belongs to the PI3/PI4-kinase family. Type II PI4K subfamily.

It localises to the cytoplasm. Its subcellular location is the cytosol. It is found in the golgi apparatus membrane. The protein localises to the endoplasmic reticulum membrane. The protein resides in the cell membrane. It localises to the early endosome membrane. The enzyme catalyses a 1,2-diacyl-sn-glycero-3-phospho-(1D-myo-inositol) + ATP = a 1,2-diacyl-sn-glycero-3-phospho-(1D-myo-inositol 4-phosphate) + ADP + H(+). Its function is as follows. Contributes to the overall PI4-kinase activity of the cell. This contribution may be especially significant in plasma membrane, endosomal and Golgi compartments. The phosphorylation of phosphatidylinositol (PI) to PI4P is the first committed step in the generation of phosphatidylinositol 4,5-bisphosphate (PIP2), a precursor of the second messenger inositol 1,4,5-trisphosphate (InsP3). The chain is Phosphatidylinositol 4-kinase type 2-beta (pi4k2b) from Xenopus tropicalis (Western clawed frog).